We begin with the raw amino-acid sequence, 249 residues long: MAAAALEPWSAVAPRRRKRAAGRRPRPGEGPRAEPEADGEAVLRRLREAEEDLRISDFCSSALETITECLRKQLEQLQPLTEALGRLHLGSSLPSASQEPLASSASHVKCVCYGLGTFASCPTARIQLAFMLLFLEKCQVPRSHCWVYDPLFSQTEVSVLTSLGVTVLSENEEGKRSVQGQPTVFYMPHCGTALYNNLLWSNWSADALSRVLIIGNSFRGLEERLLARILQENYPYIAKVSDRIAGPGF.

The segment at 1–40 is disordered; sequence MAAAALEPWSAVAPRRRKRAAGRRPRPGEGPRAEPEADGE. The segment covering 14 to 25 has biased composition (basic residues); sequence PRRRKRAAGRRP. The segment covering 26–40 has biased composition (basic and acidic residues); it reads RPGEGPRAEPEADGE.

It belongs to the SRR1 family.

Its subcellular location is the cytoplasm. In terms of biological role, plays a role in the regulation of heme biosynthesis and in the regulation of the expression of core clock genes. The protein is SRR1-like protein (Srrd) of Mus musculus (Mouse).